Consider the following 475-residue polypeptide: Squamosa promoter-binding-like protein 12 (475 aa).

Positions 49–73 (NHGSTNSSGGTFTSSSELANGSSKS) are disordered. Low complexity predominate over residues 51-73 (GSTNSSGGTFTSSSELANGSSKS). The SBP-type zinc-finger motif lies at 177-254 (SSYCQVEGCK…SDHNARRRKP (78 aa)). Residues Cys-180, Cys-185, Cys-202, His-205, Cys-221, Cys-224, His-228, and Cys-240 each coordinate Zn(2+). Positions 237–253 (KKSCRRRLSDHNARRRK) match the Bipartite nuclear localization signal motif. The segment at 437-475 (GGGGFWQDGDDPPPLDHASQAQAFMHPGNGSSSGYGHLH) is disordered. The segment covering 465–475 (NGSSSGYGHLH) has biased composition (polar residues).

Expressed in young panicles.

The protein localises to the nucleus. Trans-acting factor that binds specifically to the consensus nucleotide sequence 5'-TNCGTACAA-3'. May be involved in panicle development. This chain is Squamosa promoter-binding-like protein 12 (SPL12), found in Oryza sativa subsp. indica (Rice).